We begin with the raw amino-acid sequence, 424 residues long: L-glutamine:2-deoxy-scyllo-inosose aminotransferase (424 aa).

At lysine 202 the chain carries N6-(pyridoxal phosphate)lysine.

Belongs to the DegT/DnrJ/EryC1 family. L-glutamine:2-deoxy-scyllo-inosose/scyllo-inosose aminotransferase subfamily. Requires pyridoxal 5'-phosphate as cofactor.

The catalysed reaction is 2-deoxy-L-scyllo-inosose + L-glutamine = 2-deoxy-scyllo-inosamine + 2-oxoglutaramate. It catalyses the reaction 3-amino-2,3-dideoxy-scyllo-inosose + L-glutamine = 2-deoxystreptamine + 2-oxoglutaramate. It participates in metabolic intermediate biosynthesis; 2-deoxystreptamine biosynthesis; 2-deoxystreptamine from D-glucose 6-phosphate: step 2/4. It functions in the pathway antibiotic biosynthesis; tobramycin biosynthesis. Catalyzes the PLP-dependent transamination of 2-deoxy-scyllo-inosose (2-DOI) to form 2-deoxy-scyllo-inosamine (2-DOIA) using L-glutamine as the amino donor. Also catalyzes the transamination of 3-amino-2,3-dideoxy-scyllo-inosose (keto-2-DOIA) into 2-deoxystreptamine (2-DOS). In Streptoalloteichus tenebrarius (strain ATCC 17920 / DSM 40477 / JCM 4838 / CBS 697.72 / NBRC 16177 / NCIMB 11028 / NRRL B-12390 / A12253. 1 / ISP 5477) (Streptomyces tenebrarius), this protein is L-glutamine:2-deoxy-scyllo-inosose aminotransferase (tbmB).